We begin with the raw amino-acid sequence, 147 residues long: Transcriptional regulator MraZ (147 aa).

2 consecutive SpoVT-AbrB domains span residues 5–52 (NHPT…PMEE) and 81–124 (GQVV…NAEH).

The protein belongs to the MraZ family. In terms of assembly, forms oligomers.

It localises to the cytoplasm. Its subcellular location is the nucleoid. The protein is Transcriptional regulator MraZ of Koribacter versatilis (strain Ellin345).